Reading from the N-terminus, the 115-residue chain is NADH-ubiquinone oxidoreductase chain 3 (115 aa).

3 helical membrane passes run 3-23 (LMIT…IAFW), 55-75 (FFLV…LLPL), and 84-104 (LNTM…SLAY).

It belongs to the complex I subunit 3 family. As to quaternary structure, core subunit of respiratory chain NADH dehydrogenase (Complex I) which is composed of 45 different subunits. Interacts with TMEM186. Interacts with TMEM242.

The protein resides in the mitochondrion inner membrane. It catalyses the reaction a ubiquinone + NADH + 5 H(+)(in) = a ubiquinol + NAD(+) + 4 H(+)(out). Functionally, core subunit of the mitochondrial membrane respiratory chain NADH dehydrogenase (Complex I) which catalyzes electron transfer from NADH through the respiratory chain, using ubiquinone as an electron acceptor. Essential for the catalytic activity of complex I. The polypeptide is NADH-ubiquinone oxidoreductase chain 3 (Ovis aries (Sheep)).